Consider the following 105-residue polypeptide: Large ribosomal subunit protein eL36 (105 aa).

Residues 86-105 form a disordered region; that stretch reads QAGKKKRDDIANINRKASAK.

Belongs to the eukaryotic ribosomal protein eL36 family.

The sequence is that of Large ribosomal subunit protein eL36 (rpl36) from Dictyostelium discoideum (Social amoeba).